A 1034-amino-acid polypeptide reads, in one-letter code: Presequence protease, mitochondrial (1034 aa).

The N-terminal 29 residues, 1–29 (MLKGGMLSRWKMWSPQYKILRNHLINFKS), are a transit peptide targeting the mitochondrion. Zn(2+) is bound at residue His-128. Glu-131 serves as the catalytic Proton acceptor. His-132 and Glu-229 together coordinate Zn(2+).

Belongs to the peptidase M16 family. PreP subfamily. Homodimer. Zn(2+) is required as a cofactor.

It localises to the mitochondrion. ATP-independent protease that degrades mitochondrial transit peptides after their cleavage. Also degrades other unstructured peptides. The polypeptide is Presequence protease, mitochondrial (Drosophila melanogaster (Fruit fly)).